A 163-amino-acid polypeptide reads, in one-letter code: Transcription antitermination protein NusB (163 aa).

Belongs to the NusB family.

Involved in transcription antitermination. Required for transcription of ribosomal RNA (rRNA) genes. Binds specifically to the boxA antiterminator sequence of the ribosomal RNA (rrn) operons. The sequence is that of Transcription antitermination protein NusB from Granulibacter bethesdensis (strain ATCC BAA-1260 / CGDNIH1).